Here is a 1022-residue protein sequence, read N- to C-terminus: MIKAIDKESINNICSGQVIFDLSIAVKELIENSIDAGATTVEIRLKEYGEEFIEVIDNGSGVEPSNFVALTMKHCTSKLESFSDLLSIETYGFRGEALSSLCSLSNCIITTRTKNQVTAQRLVFDKEGKIQTQTPVAREVGTTVQLSNLFKGLPVRYQEFKRNIKKEYAKLLTILQAYALISTNTRITCYNQAGKSPRSCVLSTTSGSTIRDNLINVFGTKMSQSLDEFTASDSLFKVNGLISKIGIGSGTGQSISNSSSSSSQSSSQLSSSSSSSSSSQSSQLSIGSLSRSCADRQFFFVNSRPFEHSKLAKEINSLYQSFHKRGSYPVVIFNIEMPTNNYDVNVTPDKRTIFIQKEQQLLLLITDGLKTMWETAQSVFDTNQLGQFTFNDENENDNSNNNKQSKISSFPNLYTLKTEEDENNNKITTPIKKHSTTTTTSSLNSPSSNKKSSNSTSSSSSSNNKNNRNNLEEDGDDSFDITDQQPLKRAKYDGNYNNSNKKPELPKTPYPNKKKNNENEDEDEDEDNYVQPVFSNVNKSKNSSNSGSSNSLDDIIDDNEFISRSNGNSSNFMDDFEFKGSSNNIGSSSNGIKLKTISNNNNSNNSNNSNKIIDDINKTIDKMKQQQQPQQKMGLNDDGDDEEQQKQKQQQQQQKRKQQQQQQQIEEEEEETIDGYKQKNSKTFDITIKTDLNTISKQYLIRNGTFDKDNNPIIPNTALVVSNDDMVVNNNNSNEFDQNSIITTTSEKCCIVDKSIPQLDGKFSTSLGGIGAKQQQKAATQVTSQLQQQPSQTNQKTAEEELTKFFKKEYFKQMIVIGQFNLGFIIAKLGNDLFIIDQHAADEKYNFEILSKSVESSINSQPLLKPDTLSDLTSEEELIIIENVDLFKKNGFKFIIDHDAPTRFKIKLSAFPIIHGQSFGIKDIYEWIFMIKESSIPGSVNKIPRLNSLLASKACRKSIMVGTTLTHKEMKDVLNNLSTLDNPWCCPHGRPTMRHLVDLSIKDKLKQQQQQQQQKQQQQQQQ.

Disordered regions lie at residues 251 to 282 (TGQSISNSSSSSSQSSSQLSSSSSSSSSSQSS), 390 to 527 (FNDE…EDED), and 622 to 676 (KMKQ…IDGY). Polar residues predominate over residues 403–412 (KQSKISSFPN). Composition is skewed to low complexity over residues 436 to 469 (TTTTTSSLNSPSSNKKSSNSTSSSSSSNNKNNRN) and 647 to 664 (QKQQQQQQKRKQQQQQQQ).

The protein belongs to the DNA mismatch repair MutL/HexB family. In terms of assembly, heterodimer of pms1 and mlh1 (MutL alpha). Forms a ternary complex with MutS alpha (msh2-msh6) or MutS beta (msh2-msh3).

The protein localises to the nucleus. In terms of biological role, component of the post-replicative DNA mismatch repair system (MMR). Heterodimerizes with mlh1 to form MutL alpha. DNA repair is initiated by MutS alpha (msh2-msh6) or MutS beta (msh2-msh3) binding to a dsDNA mismatch, then MutL alpha is recruited to the heteroduplex. Assembly of the MutL-MutS-heteroduplex ternary complex in presence of rfc and pcna is sufficient to activate endonuclease activity of pms1. It introduces single-strand breaks near the mismatch and thus generates new entry points for the exonuclease exo1 to degrade the strand containing the mismatch. In Dictyostelium discoideum (Social amoeba), this protein is Mismatch repair endonuclease pms1 (pms1).